Here is a 116-residue protein sequence, read N- to C-terminus: Regulator of ribonuclease activity B (116 aa).

The protein belongs to the RraB family. Interacts with the C-terminal region of Rne.

It is found in the cytoplasm. Its function is as follows. Globally modulates RNA abundance by binding to RNase E (Rne) and regulating its endonucleolytic activity. Can modulate Rne action in a substrate-dependent manner by altering the composition of the degradosome. In Colwellia psychrerythraea (strain 34H / ATCC BAA-681) (Vibrio psychroerythus), this protein is Regulator of ribonuclease activity B.